The chain runs to 700 residues: Chaperonin CPN60, mitochondrial (700 aa).

Residues 1-9 (MRMKRIHIL) constitute a mitochondrion transit peptide. Residues 636-700 (TYKHKLHDDE…SMNDEYNYDE (65 aa)) are disordered. The segment covering 644–700 (DEDTDEDDEEDEDDEDDEDDLDDDDYDDEDEEDEEDEEDEDDEDDEDSMNDEYNYDE) has biased composition (acidic residues).

Belongs to the chaperonin (HSP60) family.

It localises to the mitochondrion matrix. Functionally, implicated in mitochondrial protein import and macromolecular assembly. May facilitate the correct folding of imported proteins. May also prevent misfolding and promote the refolding and proper assembly of unfolded polypeptides generated under stress conditions in the mitochondrial matrix. This Plasmodium falciparum (isolate FCR-3 / Gambia) protein is Chaperonin CPN60, mitochondrial.